A 262-amino-acid polypeptide reads, in one-letter code: Late embryogenesis abundant protein 31 (262 aa).

Residues 6-10 (QPKRP) carry the Nuclear localization signal (NLS) motif. SMP domains lie at 14–68 (VTYG…ANKR), 136–192 (ITIG…NHNA), and 201–260 (IKLI…NERA).

It belongs to the LEA type SMP family. In terms of tissue distribution, embryo specific, only in dry mature seeds.

It localises to the nucleus. It is found in the nucleolus. The protein localises to the cytoplasm. Its function is as follows. LEA proteins are late embryonic proteins abundant in higher plant seed embryos. The function of those proteins is not known. Promotes germination rate. Enhances cation toxicity (e.g. lithium ion) and osmotic stress (e.g. NaCl and sorbitol) tolerance during germination and in seedlings. The chain is Late embryogenesis abundant protein 31 from Arabidopsis thaliana (Mouse-ear cress).